Here is a 304-residue protein sequence, read N- to C-terminus: Mas-related G-protein coupled receptor member A1 (304 aa).

Residues 1 to 17 (MDNTIPGGINITILIPN) are Extracellular-facing. Asn-10 is a glycosylation site (N-linked (GlcNAc...) asparagine). A helical transmembrane segment spans residues 18–38 (LMIIIFGLVGLTGNGIVFWLL). At 39 to 53 (GFCLHRNAFSVYILN) the chain is on the cytoplasmic side. The helical transmembrane segment at 54–74 (LALADFFFLLGHIIDSILLLL) threads the bilayer. Residue Asn-75 is a topological domain, extracellular. Residues 76-96 (VFYPITFLLCFYTIMMVLYIA) traverse the membrane as a helical segment. Residues 97–131 (GLSMLSAISTERCLSVLCPIWYHCHRPEHTSTVMC) lie on the Cytoplasmic side of the membrane. Residues 132–152 (AVIWVLSLLICILNSYFCGFL) form a helical membrane-spanning segment. The Extracellular segment spans residues 153 to 166 (NTQYKNENGCLALN). Residues 167–187 (FFTAAYLMFLFVVLCLSSLAL) form a helical membrane-spanning segment. The Cytoplasmic segment spans residues 188-206 (VARLFCGTGQIKLTRLYVT). The chain crosses the membrane as a helical span at residues 207 to 227 (IILSILVFLLCGLPFGIHWFL). Topologically, residues 228-243 (LFKIKDDFHVFDLGFY) are extracellular. The chain crosses the membrane as a helical span at residues 244 to 264 (LASVVLTAINSCANPIIYFFV). The Cytoplasmic segment spans residues 265–304 (GSFRHRLKHQTLKMVLQNALQDTPETAKIMVEMSRSKSEP).

The protein belongs to the G-protein coupled receptor 1 family. Mas subfamily. As to expression, expressed in a subset of sensory neurons that includes nociceptors. Expressed in the subclass of non-peptidergic sensory neurons that are IB4(+) and VR1(-).

It localises to the cell membrane. In terms of biological role, orphan receptor activated by a subset of RFamide-family neuropeptides such as FLRF-amide and FMRF-amide. Mediates its action by association with G proteins that activate a phosphatidylinositol-calcium second messenger system. Its effect is mediated by G(q) and G(11) proteins. May regulate the function of nociceptive neurons by modulation of pain perception. This Mus musculus (Mouse) protein is Mas-related G-protein coupled receptor member A1 (Mrgpra1).